The chain runs to 55 residues: UPF0391 membrane protein Neut_2351/Neut_2360 (55 aa).

A run of 2 helical transmembrane segments spans residues 4 to 24 and 28 to 48; these read LAVV…TGVA and AEMA…FWVL.

This sequence belongs to the UPF0391 family.

Its subcellular location is the cell membrane. In Nitrosomonas eutropha (strain DSM 101675 / C91 / Nm57), this protein is UPF0391 membrane protein Neut_2351/Neut_2360.